Here is a 204-residue protein sequence, read N- to C-terminus: MRG/MORF4L-binding protein (204 aa).

Residues 1-15 are compositionally biased toward gly residues; the sequence is MGEAEVGGTGAPGDK. Positions 1–27 are disordered; that stretch reads MGEAEVGGTGAPGDKGPGEAAPSPAEE. Gly-2 carries the post-translational modification N-acetylglycine. Ser-23 bears the Phosphoserine mark. Residue Lys-127 forms a Glycyl lysine isopeptide (Lys-Gly) (interchain with G-Cter in SUMO2) linkage. Basic and acidic residues-rich tracts occupy residues 128 to 140 and 153 to 175; these read EEMK…HSGA and ALEK…EGAD. A disordered region spans residues 128 to 204; sequence EEMKEDVDPH…SPSAAKRRRT (77 aa). The segment covering 189–198 has biased composition (low complexity); sequence ANSNPSSPSA. Phosphoserine occurs at positions 191 and 195.

Belongs to the EAF7 family. As to quaternary structure, component of the NuA4 histone acetyltransferase complex which contains the catalytic subunit KAT5/TIP60 and the subunits EP400, TRRAP/PAF400, BRD8/SMAP, EPC1, DMAP1/DNMAP1, RUVBL1/TIP49, RUVBL2, ING3, actin, ACTL6A/BAF53A, MORF4L1/MRG15, MORF4L2/MRGX, MRGBP, YEATS4/GAS41, VPS72/YL1 and MEAF6. MRGBP may interact directly with MORF4L1/MRG15 and MORF4L2/MRGX.

Its subcellular location is the nucleus. Component of the NuA4 histone acetyltransferase (HAT) complex which is involved in transcriptional activation of select genes principally by acetylation of nucleosomal histones H4 and H2A. This modification may both alter nucleosome - DNA interactions and promote interaction of the modified histones with other proteins which positively regulate transcription. This complex may be required for the activation of transcriptional programs associated with oncogene and proto-oncogene mediated growth induction, tumor suppressor mediated growth arrest and replicative senescence, apoptosis, and DNA repair. NuA4 may also play a direct role in DNA repair when recruited to sites of DNA damage. This is MRG/MORF4L-binding protein (Mrgbp) from Mus musculus (Mouse).